Here is a 565-residue protein sequence, read N- to C-terminus: Proline--tRNA ligase (565 aa).

This sequence belongs to the class-II aminoacyl-tRNA synthetase family. ProS type 1 subfamily. As to quaternary structure, homodimer.

The protein localises to the cytoplasm. The enzyme catalyses tRNA(Pro) + L-proline + ATP = L-prolyl-tRNA(Pro) + AMP + diphosphate. Its function is as follows. Catalyzes the attachment of proline to tRNA(Pro) in a two-step reaction: proline is first activated by ATP to form Pro-AMP and then transferred to the acceptor end of tRNA(Pro). As ProRS can inadvertently accommodate and process non-cognate amino acids such as alanine and cysteine, to avoid such errors it has two additional distinct editing activities against alanine. One activity is designated as 'pretransfer' editing and involves the tRNA(Pro)-independent hydrolysis of activated Ala-AMP. The other activity is designated 'posttransfer' editing and involves deacylation of mischarged Ala-tRNA(Pro). The misacylated Cys-tRNA(Pro) is not edited by ProRS. The sequence is that of Proline--tRNA ligase from Francisella tularensis subsp. tularensis (strain FSC 198).